Consider the following 334-residue polypeptide: Tryptophan--tRNA ligase (334 aa).

ATP-binding positions include 11–13 and 19–20; these read QPS and GN. The 'HIGH' region signature appears at 12-20; sequence PSGELTIGN. Asp-135 contributes to the L-tryptophan binding site. ATP contacts are provided by residues 147–149, Val-186, and 195–199; these read GED and KMSKS. A 'KMSKS' region motif is present at residues 195–199; sequence KMSKS.

This sequence belongs to the class-I aminoacyl-tRNA synthetase family. Homodimer.

It is found in the cytoplasm. The enzyme catalyses tRNA(Trp) + L-tryptophan + ATP = L-tryptophyl-tRNA(Trp) + AMP + diphosphate + H(+). Its function is as follows. Catalyzes the attachment of tryptophan to tRNA(Trp). Amino acylates tRNA(Trp) with both L- and D-tryptophan, although D-tryptophan is a poor substrate. The sequence is that of Tryptophan--tRNA ligase from Escherichia coli (strain K12).